A 953-amino-acid polypeptide reads, in one-letter code: Coatomer subunit beta (953 aa).

An N-acetylthreonine modification is found at T2. HEAT repeat units follow at residues 96-131 (HEMILVCDAYRKDLQHPNEFIRGSTLRFLCKLKEAE), 132-168 (LLEPLMPAIRACLEHRHSYVRRNAVLAIYTIYRNFEH), 240-276 (SERARFIRCIYNLLQSSSPAVKYEAAGTLVTLSSAPT), 277-314 (AIKAAAQCYIDLIIKESDNNVKLIVLDRLIELKEHPAH), 316-353 (RVLQDLVMDILRVLSTPDLEVRKKTLQLALDLVSSRNV), and 396-433 (DMAANVIPVLMEFLSDSNEAAAADVLEFVREAIQRFDN). The residue at position 494 (K494) is an N6-acetyllysine.

As to quaternary structure, oligomeric complex that consists of at least the alpha, beta, beta', gamma, delta, epsilon and zeta subunits. Interacts with ARF1 (myristoylated); this interaction is required for binding of COPB1 to Golgi membranes. Interacts with CAPN8 and PRKCE. Interacts with SCYL1. Interacts with COPG1. Interacts (via trunk domain) with ARF1 (via switch I region); the interaction is direct. Interacts with KCNK2 (via N-terminus); this interaction increases the channel-mediated whole cell currents and promotes plasma membrane expression of KCNK2. Interacts with STX17. Interacts with TMEM115. Interacts with TMEM41B. In terms of processing, proteolytically cleaved between Ser-528 and Ser-529 by CAPN8.

It is found in the cytoplasm. The protein localises to the cytosol. It localises to the golgi apparatus membrane. Its subcellular location is the cytoplasmic vesicle. The protein resides in the COPI-coated vesicle membrane. It is found in the cell membrane. The protein localises to the endoplasmic reticulum-Golgi intermediate compartment. Its function is as follows. The coatomer is a cytosolic protein complex that binds to dilysine motifs and reversibly associates with Golgi non-clathrin-coated vesicles, which further mediate biosynthetic protein transport from the ER, via the Golgi up to the trans Golgi network. Coatomer complex is required for budding from Golgi membranes, and is essential for the retrograde Golgi-to-ER transport of dilysine-tagged proteins. In mammals, the coatomer can only be recruited by membranes associated to ADP-ribosylation factors (ARFs), which are small GTP-binding proteins; the complex also influences the Golgi structural integrity, as well as the processing, activity, and endocytic recycling of LDL receptors. Involved in the Golgi disassembly and reassembly processes during cell cycle. Plays a functional role in facilitating the transport of kappa-type opioid receptor mRNAs into axons and enhances translation of these proteins. Required for limiting lipid storage in lipid droplets. Involved in lipid homeostasis by regulating the presence of perilipin family members PLIN2 and PLIN3 at the lipid droplet surface and promoting the association of adipocyte surface triglyceride lipase (PNPLA2) with the lipid droplet to mediate lipolysis. Involved in autophagy by playing a role in early endosome function. Plays a role in organellar compartmentalization of secretory compartments including endoplasmic reticulum (ER)-Golgi intermediate compartment (ERGIC), Golgi, trans-Golgi network (TGN) and recycling endosomes, and in biosynthetic transport of CAV1. The sequence is that of Coatomer subunit beta (COPB1) from Bos taurus (Bovine).